The sequence spans 502 residues: MPPLKLNSKNLAAILNAGKGQIKVPTYPRNGAVKEGIVHIGVGGFHRAHLAVYIDRLMQNHGVTDYAIAGVGLTPFDKKMRDILRSQDHLYTVIERSAKGSFANVVGSINSFLFAPDDREAVVAKMAHPDTHIVSLTITESGYYYNENTHELVSEHPDIQFDLDPANEKTPRTTFGFLYAALARRFKQGLNPFTVMSCDNMQKNGAITRHMLESFARLRNPEIAEWISKKGHFPNAMVDRITPQTAPADITALANDFGIQDDWPVVTEPFMDWVIEDHFCDGRPPFEKVGVKVVKDLRAVEEYEKHKLRLLNGSHSAIGYAGQLAGFQYVHEVLQNDTYKKFLWQMMQEEVKPLLPEIPGVDIDEYCRTLIERFSNPTIKDQLPRICLNASGKIPQFIMPSIAEAIWVTGPFRRLCFVAAAWFRYLHGVDDAGNKFDIEDPMLEELQAKAKAGGLEPHEILSIKSLFGDDLRGDKRFLQEITTAMQLIDRDGVLKTMPKYVD.

37–48 (IVHIGVGGFHRA) is an NAD(+) binding site.

The protein belongs to the mannitol dehydrogenase family. In terms of assembly, monomer.

The enzyme catalyses D-mannitol + NAD(+) = D-fructose + NADH + H(+). Functionally, catalyzes the NAD(H)-dependent interconversion of D-fructose and D-mannitol in the mannitol metabolic pathway. The sequence is that of Mannitol 2-dehydrogenase from Emericella nidulans (strain FGSC A4 / ATCC 38163 / CBS 112.46 / NRRL 194 / M139) (Aspergillus nidulans).